Consider the following 444-residue polypeptide: Methylenetetrahydrofolate--tRNA-(uracil-5-)-methyltransferase TrmFO (444 aa).

10–15 (GAGLAG) is an FAD binding site.

The protein belongs to the MnmG family. TrmFO subfamily. It depends on FAD as a cofactor.

The protein localises to the cytoplasm. The catalysed reaction is uridine(54) in tRNA + (6R)-5,10-methylene-5,6,7,8-tetrahydrofolate + NADH + H(+) = 5-methyluridine(54) in tRNA + (6S)-5,6,7,8-tetrahydrofolate + NAD(+). The enzyme catalyses uridine(54) in tRNA + (6R)-5,10-methylene-5,6,7,8-tetrahydrofolate + NADPH + H(+) = 5-methyluridine(54) in tRNA + (6S)-5,6,7,8-tetrahydrofolate + NADP(+). Its function is as follows. Catalyzes the folate-dependent formation of 5-methyl-uridine at position 54 (M-5-U54) in all tRNAs. The protein is Methylenetetrahydrofolate--tRNA-(uracil-5-)-methyltransferase TrmFO of Streptococcus agalactiae serotype Ia (strain ATCC 27591 / A909 / CDC SS700).